A 197-amino-acid chain; its full sequence is Probable nicotinate-nucleotide adenylyltransferase (197 aa).

Belongs to the NadD family.

It carries out the reaction nicotinate beta-D-ribonucleotide + ATP + H(+) = deamido-NAD(+) + diphosphate. Its pathway is cofactor biosynthesis; NAD(+) biosynthesis; deamido-NAD(+) from nicotinate D-ribonucleotide: step 1/1. Functionally, catalyzes the reversible adenylation of nicotinate mononucleotide (NaMN) to nicotinic acid adenine dinucleotide (NaAD). The protein is Probable nicotinate-nucleotide adenylyltransferase of Borrelia garinii subsp. bavariensis (strain ATCC BAA-2496 / DSM 23469 / PBi) (Borreliella bavariensis).